The chain runs to 1109 residues: Ankyrin repeat- and BTB/POZ domain-containing protein 3 (1109 aa).

Residues 168–188 (IVLSWGLAAHCTAAALAALSL) form a helical membrane-spanning segment. The segment at 260–302 (SCSGPGPGSSSGSGPGPGSGPGAPAADKERETPGGGAASGGPC) is disordered. A compositionally biased stretch (gly residues) spans 264 to 280 (PGPGSSSGSGPGPGSGP). 5 ANK repeats span residues 608–637 (QGMT…DLNV), 654–683 (RHWT…KVEG), 692–721 (YSET…DPLI), 735–764 (GDMN…KEKS), and 830–859 (TWLE…TIQE). The 67-residue stretch at 928–994 (SDVTFLVEGR…LYYGGPESLL (67 aa)) folds into the BTB domain.

The protein localises to the membrane. The sequence is that of Ankyrin repeat- and BTB/POZ domain-containing protein 3 (Abtb3) from Mus musculus (Mouse).